We begin with the raw amino-acid sequence, 68 residues long: Conotoxin TsMMSK-021 (68 aa).

The N-terminal stretch at 1–20 is a signal peptide; that stretch reads MMSKLGVLLTICLLLFPLTA. A propeptide spanning residues 21-50 is cleaved from the precursor; it reads VPLDGDQHADRPADRMQDISSEQHPLFDPV. 3 disulfides stabilise this stretch: Cys53–Cys66, Cys54–Cys62, and Cys58–Cys65. Pro64 is modified (4-hydroxyproline).

The protein belongs to the conotoxin M superfamily. Expressed by the venom duct.

It localises to the secreted. The protein is Conotoxin TsMMSK-021 of Conus tessulatus (Tessellate cone).